Here is a 210-residue protein sequence, read N- to C-terminus: Cytochrome c oxidase subunit 2 (210 aa).

Residues 1–15 (MSFILTFWMIFLMDS) are Mitochondrial intermembrane-facing. Residues 16–36 (IIVLISFSIFLSVWICALIIA) form a helical membrane-spanning segment. The Mitochondrial matrix segment spans residues 37-63 (TVLTVTKINNIYCTWDFISSKFIDTYW). Residues 64-84 (FVLGMMFILCLLLRLCLLLYF) traverse the membrane as a helical segment. Topologically, residues 85–210 (SCINFVSFDL…GFMPIVINFI (126 aa)) are mitochondrial intermembrane. H157, C192, E194, C196, H200, and M203 together coordinate Cu cation. E194 contributes to the Mg(2+) binding site.

Belongs to the cytochrome c oxidase subunit 2 family. As to quaternary structure, component of the cytochrome c oxidase (complex IV, CIV), a multisubunit enzyme composed of a catalytic core of 3 subunits and several supernumerary subunits. The complex exists as a monomer or a dimer and forms supercomplexes (SCs) in the inner mitochondrial membrane with ubiquinol-cytochrome c oxidoreductase (cytochrome b-c1 complex, complex III, CIII). Cu cation is required as a cofactor.

It is found in the mitochondrion inner membrane. The enzyme catalyses 4 Fe(II)-[cytochrome c] + O2 + 8 H(+)(in) = 4 Fe(III)-[cytochrome c] + 2 H2O + 4 H(+)(out). Its function is as follows. Component of the cytochrome c oxidase, the last enzyme in the mitochondrial electron transport chain which drives oxidative phosphorylation. The respiratory chain contains 3 multisubunit complexes succinate dehydrogenase (complex II, CII), ubiquinol-cytochrome c oxidoreductase (cytochrome b-c1 complex, complex III, CIII) and cytochrome c oxidase (complex IV, CIV), that cooperate to transfer electrons derived from NADH and succinate to molecular oxygen, creating an electrochemical gradient over the inner membrane that drives transmembrane transport and the ATP synthase. Cytochrome c oxidase is the component of the respiratory chain that catalyzes the reduction of oxygen to water. Electrons originating from reduced cytochrome c in the intermembrane space (IMS) are transferred via the dinuclear copper A center (CU(A)) of subunit 2 and heme A of subunit 1 to the active site in subunit 1, a binuclear center (BNC) formed by heme A3 and copper B (CU(B)). The BNC reduces molecular oxygen to 2 water molecules using 4 electrons from cytochrome c in the IMS and 4 protons from the mitochondrial matrix. The chain is Cytochrome c oxidase subunit 2 (COXII) from Trypanosoma brucei brucei.